Consider the following 192-residue polypeptide: A-type ATP synthase subunit E (192 aa).

The interval methionine 1–alanine 66 is disordered. Basic and acidic residues predominate over residues glutamate 8 to glutamate 26. Residues glutamate 27–arginine 49 show a composition bias toward acidic residues. Over residues glutamate 50–alanine 66 the composition is skewed to basic and acidic residues.

Belongs to the V-ATPase E subunit family. In terms of assembly, has multiple subunits with at least A(3), B(3), C, D, E, F, H, I and proteolipid K(x).

Its subcellular location is the cell membrane. Component of the A-type ATP synthase that produces ATP from ADP in the presence of a proton gradient across the membrane. This Natronomonas pharaonis (strain ATCC 35678 / DSM 2160 / CIP 103997 / JCM 8858 / NBRC 14720 / NCIMB 2260 / Gabara) (Halobacterium pharaonis) protein is A-type ATP synthase subunit E.